A 570-amino-acid chain; its full sequence is L-ascorbate oxidase (570 aa).

Positions Met1 to Ala18 are cleaved as a signal peptide. Plastocyanin-like domains follow at residues Trp33–Val140 and Phe154–Val317. 3 cysteine pairs are disulfide-bonded: Cys36-Cys219, Cys98-Cys557, and Cys197-Cys211. Cu cation is bound by residues His77 and His79. A glycan (N-linked (GlcNAc...) asparagine) is linked at Asn109. 2 residues coordinate Cu cation: His121 and His123. Asn196 carries N-linked (GlcNAc...) asparagine glycosylation. N-linked (GlcNAc...) asparagine glycosylation is found at Asn229, Asn343, Asn384, Asn407, Asn434, Asn442, and Asn458. In terms of domain architecture, Plastocyanin-like 3 spans Arg426–Gly543. Residues His463, His466, His468, His525, Cys526, His527, His531, and Met536 each contribute to the Cu cation site.

Belongs to the multicopper oxidase family. Dimer. Cu cation serves as cofactor.

The protein localises to the secreted. It catalyses the reaction 4 L-ascorbate + O2 = 4 monodehydro-L-ascorbate radical + 2 H2O. Its pathway is cofactor degradation; L-ascorbate degradation. In terms of biological role, ascorbate oxidase involved in a redox system involving ascorbic acid (AsA). The oxidation of AsA represses responses to high salinity and oxidative stress conditions such as vegetative growth and seed production reductions. Negative regulator of defense responses toward incompatible Turnip mosaic virus (TuMV strain UK1) by preventing jasmonic acid (JA)- dependent accumulation of ascorbic acid (AsA, AS) and dehydroascobic acid (DHA). In Brassica rapa subsp. pekinensis (Chinese cabbage), this protein is L-ascorbate oxidase.